A 282-amino-acid polypeptide reads, in one-letter code: MPELPEVEVVRRGLAAHVTGRTISAVRVHHPRAVRRHEAGPADLTARLLDSVITGTGRRGKYLWLTLGDGSAVVVHLGMSGQMLLGPVRNENHLRIAVLLDDGTALSFVDQRTFGGWMLADLVTVDGSDVPAPVAHIARDPLDPLFDRAAVVNVLRRKHSEIKRQLLDQTVVSGIGNIYADESLWRAKINGARLASGVSKAKLAELLDAATDVMTDALAQGGTSFDSLYVNVNGESGYFDRSLDAYGREGEPCRRCGAIMRRDKFMNRSSFYCPRCQPRPRV.

The active-site Schiff-base intermediate with DNA is the Pro-2. Glu-3 serves as the catalytic Proton donor. The active-site Proton donor; for beta-elimination activity is the Lys-61. Positions 93, 112, and 158 each coordinate DNA. An FPG-type zinc finger spans residues 244-278; the sequence is DAYGREGEPCRRCGAIMRRDKFMNRSSFYCPRCQP. Arg-268 functions as the Proton donor; for delta-elimination activity in the catalytic mechanism.

The protein belongs to the FPG family. Monomer. Requires Zn(2+) as cofactor.

The enzyme catalyses Hydrolysis of DNA containing ring-opened 7-methylguanine residues, releasing 2,6-diamino-4-hydroxy-5-(N-methyl)formamidopyrimidine.. It catalyses the reaction 2'-deoxyribonucleotide-(2'-deoxyribose 5'-phosphate)-2'-deoxyribonucleotide-DNA = a 3'-end 2'-deoxyribonucleotide-(2,3-dehydro-2,3-deoxyribose 5'-phosphate)-DNA + a 5'-end 5'-phospho-2'-deoxyribonucleoside-DNA + H(+). Involved in base excision repair of DNA damaged by oxidation or by mutagenic agents. Acts as a DNA glycosylase that recognizes and removes damaged bases. Has a preference for oxidized purines, such as 7,8-dihydro-8-oxoguanine (8-oxoG). Has AP (apurinic/apyrimidinic) lyase activity and introduces nicks in the DNA strand. Cleaves the DNA backbone by beta-delta elimination to generate a single-strand break at the site of the removed base with both 3'- and 5'-phosphates. The polypeptide is Formamidopyrimidine-DNA glycosylase (Mycolicibacterium gilvum (strain PYR-GCK) (Mycobacterium gilvum (strain PYR-GCK))).